Reading from the N-terminus, the 610-residue chain is All-trans-retinol 13,14-reductase (610 aa).

The N-terminal stretch at 1–18 (MWLPLVLLLAVLLLAVLC) is a signal peptide.

The protein belongs to the carotenoid/retinoid oxidoreductase family. CrtISO subfamily. NAD(+) is required as a cofactor. Requires NADP(+) as cofactor. FAD serves as cofactor. In terms of tissue distribution, expressed in liver; expression positively correlates with obesity and liver steatosis. Expressed in adipose tissue; expression tends to be decreased in obese versus lean individuals.

The protein localises to the endoplasmic reticulum membrane. The enzyme catalyses all-trans-13,14-dihydroretinol + A = all-trans-retinol + AH2. Its function is as follows. Catalyzes the saturation of all-trans-retinol to all-trans-13,14-dihydroretinol. Does not exhibit any activity toward all-trans-retinoic acid, nor 9-cis, 11-cis or 13-cis-retinol isomers. May play a role in the metabolism of vitamin A. Independently of retinol conversion, may regulate liver metabolism upstream of MLXIPL/ChREBP. May play a role in adipocyte differentiation. This chain is All-trans-retinol 13,14-reductase (RETSAT), found in Homo sapiens (Human).